The following is a 707-amino-acid chain: D-(-)-3-hydroxybutyrate oligomer hydrolase (707 aa).

The signal sequence occupies residues 1 to 24 (MHHDNFRRLGNAAFAAAAALLAVA). Ser-311 acts as the Charge relay system in catalysis.

It belongs to the D-(-)-3-hydroxybutyrate oligomer hydrolase family.

The protein localises to the secreted. The enzyme catalyses (3R)-hydroxybutanoate dimer + H2O = 2 (R)-3-hydroxybutanoate + H(+). It participates in lipid metabolism; butanoate metabolism. Participates in the degradation of poly-3-hydroxybutyrate (PHB). It works downstream of poly(3-hydroxybutyrate) depolymerase, hydrolyzing D(-)-3-hydroxybutyrate oligomers of various length (3HB-oligomers) into 3HB-monomers. The chain is D-(-)-3-hydroxybutyrate oligomer hydrolase from Cupriavidus pinatubonensis (strain JMP 134 / LMG 1197) (Cupriavidus necator (strain JMP 134)).